The following is a 362-amino-acid chain: MERITVTLGERSYPITIAAGLFNEPASFLPLKSGDQVMLVTNETLAPLYLDKVRGVLERAGVNVDSVILPDGEQYKSLTVLDTVFTALLKKPHGRDTTLVALGGGVIGDLTGFAAASYQRGVRFIQVPTTLLSQVDSSVGGKTAVNHPLGKNMIGAFYQPASVVVDLDCLKTLPARELASGLAEVIKYGIILDADFFTWLEGNLDALLRLDGPAMAYCIRRCCELKAEVVAADEREAGLRALLNLGHTFGHAIEAEMGYGNWLHGEAVAAGIVMAARASERLGQFSSTDTQRIIALLERAGLPVNGPCEMSAQDYLPHMLRDKKVLAGELRLVLPLAIGKSEVRGGVSHEVVLSAIADCQQA.

Residues 71-76 (DGEQYK), 105-109 (GVIGD), 129-130 (TT), Lys142, Lys151, and 169-172 (CLKT) contribute to the NAD(+) site. Positions 184, 247, and 264 each coordinate Zn(2+).

This sequence belongs to the sugar phosphate cyclases superfamily. Dehydroquinate synthase family. Co(2+) serves as cofactor. Requires Zn(2+) as cofactor. The cofactor is NAD(+).

The protein resides in the cytoplasm. It carries out the reaction 7-phospho-2-dehydro-3-deoxy-D-arabino-heptonate = 3-dehydroquinate + phosphate. It functions in the pathway metabolic intermediate biosynthesis; chorismate biosynthesis; chorismate from D-erythrose 4-phosphate and phosphoenolpyruvate: step 2/7. Functionally, catalyzes the conversion of 3-deoxy-D-arabino-heptulosonate 7-phosphate (DAHP) to dehydroquinate (DHQ). This is 3-dehydroquinate synthase from Salmonella enteritidis PT4 (strain P125109).